Consider the following 20-residue polypeptide: Elongation factor Tu (20 aa).

The protein belongs to the GTP-binding elongation factor family. EF-Tu/EF-1A subfamily. Monomer.

The protein localises to the cytoplasm. In terms of biological role, this protein promotes the GTP-dependent binding of aminoacyl-tRNA to the A-site of ribosomes during protein biosynthesis. The polypeptide is Elongation factor Tu (tuf) (Mycoplasmopsis synoviae (Mycoplasma synoviae)).